A 379-amino-acid polypeptide reads, in one-letter code: Cobalt-precorrin-5B C(1)-methyltransferase (379 aa).

It belongs to the CbiD family.

The catalysed reaction is Co-precorrin-5B + S-adenosyl-L-methionine = Co-precorrin-6A + S-adenosyl-L-homocysteine. The protein operates within cofactor biosynthesis; adenosylcobalamin biosynthesis; cob(II)yrinate a,c-diamide from sirohydrochlorin (anaerobic route): step 6/10. Its function is as follows. Catalyzes the methylation of C-1 in cobalt-precorrin-5B to form cobalt-precorrin-6A. The sequence is that of Cobalt-precorrin-5B C(1)-methyltransferase from Salmonella heidelberg (strain SL476).